A 56-amino-acid chain; its full sequence is AAKKRPWKCCDQAVCTRSIPPICRCMDQVFECPSTCKACGPSVGDPSRRVCQDQYV.

4 cysteine pairs are disulfide-bonded: cysteine 10–cysteine 25, cysteine 15–cysteine 23, cysteine 32–cysteine 39, and cysteine 36–cysteine 51.

The protein belongs to the Bowman-Birk serine protease inhibitor family.

The sequence is that of Bowman-Birk type proteinase inhibitor I-2B from Triticum aestivum (Wheat).